The following is a 185-amino-acid chain: Calcium and integrin-binding family member 4 (185 aa).

3 EF-hand domains span residues 62-95 (RVNP…FSEQ), 97-132 (CPSL…LLKS), and 138-174 (DLLM…SPDF). Positions 110, 112, 114, and 121 each coordinate Ca(2+).

Interacts with ITGA2B (via C-terminus cytoplasmic tail region); the interaction is stabilized/increased in a calcium- and magnesium-dependent manner. Expressed weakly in megakaryocytes and endothelial cells.

This chain is Calcium and integrin-binding family member 4 (Cib4), found in Mus musculus (Mouse).